We begin with the raw amino-acid sequence, 550 residues long: Dihydroxy-acid dehydratase (550 aa).

D78 is a Mg(2+) binding site. C119 contributes to the [2Fe-2S] cluster binding site. 2 residues coordinate Mg(2+): D120 and K121. K121 is modified (N6-carboxylysine). Position 191 (C191) interacts with [2Fe-2S] cluster. Residue E440 participates in Mg(2+) binding. Catalysis depends on S466, which acts as the Proton acceptor.

This sequence belongs to the IlvD/Edd family. Homodimer. [2Fe-2S] cluster is required as a cofactor. The cofactor is Mg(2+).

The catalysed reaction is (2R)-2,3-dihydroxy-3-methylbutanoate = 3-methyl-2-oxobutanoate + H2O. It carries out the reaction (2R,3R)-2,3-dihydroxy-3-methylpentanoate = (S)-3-methyl-2-oxopentanoate + H2O. Its pathway is amino-acid biosynthesis; L-isoleucine biosynthesis; L-isoleucine from 2-oxobutanoate: step 3/4. It participates in amino-acid biosynthesis; L-valine biosynthesis; L-valine from pyruvate: step 3/4. In terms of biological role, functions in the biosynthesis of branched-chain amino acids. Catalyzes the dehydration of (2R,3R)-2,3-dihydroxy-3-methylpentanoate (2,3-dihydroxy-3-methylvalerate) into 2-oxo-3-methylpentanoate (2-oxo-3-methylvalerate) and of (2R)-2,3-dihydroxy-3-methylbutanoate (2,3-dihydroxyisovalerate) into 2-oxo-3-methylbutanoate (2-oxoisovalerate), the penultimate precursor to L-isoleucine and L-valine, respectively. This Methanococcus maripaludis (strain C7 / ATCC BAA-1331) protein is Dihydroxy-acid dehydratase.